We begin with the raw amino-acid sequence, 882 residues long: DNA mismatch repair protein MutS (882 aa).

629 to 636 (GPNMGGKS) contributes to the ATP binding site.

This sequence belongs to the DNA mismatch repair MutS family.

In terms of biological role, this protein is involved in the repair of mismatches in DNA. It is possible that it carries out the mismatch recognition step. This protein has a weak ATPase activity. In Ralstonia nicotianae (strain ATCC BAA-1114 / GMI1000) (Ralstonia solanacearum), this protein is DNA mismatch repair protein MutS.